The primary structure comprises 322 residues: uncharacterized protein (322 aa).

The Radical SAM core domain occupies 34–286 (KFKQKIFKIP…QRLSKDKVPE (253 aa)). Residues Cys-50, Cys-58, and Cys-61 each coordinate [4Fe-4S] cluster.

The protein belongs to the radical SAM superfamily. [4Fe-4S] cluster is required as a cofactor.

This is an uncharacterized protein from Methanocaldococcus jannaschii (strain ATCC 43067 / DSM 2661 / JAL-1 / JCM 10045 / NBRC 100440) (Methanococcus jannaschii).